Reading from the N-terminus, the 243-residue chain is Ribosomal RNA small subunit methyltransferase G (243 aa).

Residues Gly82, Phe87, 133 to 134 (AE), and Arg152 each bind S-adenosyl-L-methionine.

The protein belongs to the methyltransferase superfamily. RNA methyltransferase RsmG family.

Its subcellular location is the cytoplasm. Functionally, specifically methylates the N7 position of a guanine in 16S rRNA. This chain is Ribosomal RNA small subunit methyltransferase G, found in Clostridium novyi (strain NT).